The chain runs to 144 residues: Putative sugar phosphate isomerase RT0290 (144 aa).

His12 contributes to the substrate binding site. The Proton donor role is filled by His101. Residue Arg135 coordinates substrate.

The protein belongs to the LacAB/RpiB family.

This is Putative sugar phosphate isomerase RT0290 from Rickettsia typhi (strain ATCC VR-144 / Wilmington).